Reading from the N-terminus, the 146-residue chain is L-fucose mutarotase (146 aa).

The active-site Proton donor is His-22. Substrate-binding positions include Asp-30, Arg-109, and 131–133; that span reads YGN.

It belongs to the RbsD / FucU family. FucU mutarotase subfamily. In terms of assembly, homodecamer.

It is found in the cytoplasm. The enzyme catalyses alpha-L-fucose = beta-L-fucose. Its pathway is carbohydrate metabolism; L-fucose metabolism. Its function is as follows. Involved in the anomeric conversion of L-fucose. This Glaesserella parasuis serovar 5 (strain SH0165) (Haemophilus parasuis) protein is L-fucose mutarotase.